A 254-amino-acid polypeptide reads, in one-letter code: Dihydroorotate dehydrogenase B (NAD(+)), electron transfer subunit (254 aa).

The region spanning 1-99 is the FAD-binding FR-type domain; it reads MLQTEMKVIQ…LGPLGKGFDI (99 aa). Residues 50–53, 67–69, and 74–75 each bind FAD; these read RPIS, LYR, and GT. [2Fe-2S] cluster-binding residues include C218, C223, C226, and C241.

The protein belongs to the PyrK family. As to quaternary structure, heterotetramer of 2 PyrK and 2 PyrD type B subunits. [2Fe-2S] cluster is required as a cofactor. Requires FAD as cofactor.

Its pathway is pyrimidine metabolism; UMP biosynthesis via de novo pathway; orotate from (S)-dihydroorotate (NAD(+) route): step 1/1. Responsible for channeling the electrons from the oxidation of dihydroorotate from the FMN redox center in the PyrD type B subunit to the ultimate electron acceptor NAD(+). The polypeptide is Dihydroorotate dehydrogenase B (NAD(+)), electron transfer subunit (Listeria monocytogenes serotype 4a (strain HCC23)).